We begin with the raw amino-acid sequence, 150 residues long: Transcriptional repressor NrdR (150 aa).

The segment at 3–34 is a zinc-finger region; the sequence is CPFCNFEESKVVDSRATDDNTTIRRRRECLNC. The ATP-cone domain maps to 49–139; that stretch reads VLVVKKDLTR…VYRQFKDINT (91 aa).

This sequence belongs to the NrdR family. It depends on Zn(2+) as a cofactor.

Negatively regulates transcription of bacterial ribonucleotide reductase nrd genes and operons by binding to NrdR-boxes. The chain is Transcriptional repressor NrdR from Clostridium botulinum (strain Alaska E43 / Type E3).